The following is a 182-amino-acid chain: Lipid A acyltransferase PagP (182 aa).

The N-terminal stretch at 1–21 is a signal peptide; sequence MTQYFRALAFFLLLVPATAMA. The N-palmitoyl cysteine moiety is linked to residue C22. C22 carries S-diacylglycerol cysteine lipidation. Active-site residues include H55, D98, and S99.

The protein belongs to the lipid A palmitoyltransferase family. Homodimer.

The protein resides in the cell outer membrane. It catalyses the reaction a lipid A + a 1,2-diacyl-sn-glycero-3-phosphocholine = a hepta-acyl lipid A + a 2-acyl-sn-glycero-3-phosphocholine. The catalysed reaction is a lipid IVA + a 1,2-diacyl-sn-glycero-3-phosphocholine = a lipid IVB + a 2-acyl-sn-glycero-3-phosphocholine. It carries out the reaction a lipid IIA + a 1,2-diacyl-sn-glycero-3-phosphocholine = a lipid IIB + a 2-acyl-sn-glycero-3-phosphocholine. Transfers a fatty acid residue from the sn-1 position of a phospholipid to the N-linked hydroxyfatty acid chain on the proximal unit of lipid A or its precursors. Required for resistance to cationic antimicrobial peptides (CAMPs). Modifications of lipid A with an acyl chain to evade host immune defenses by resisting antibody-mediated complement lysis during respiratory infection. This Bordetella bronchiseptica (strain ATCC BAA-588 / NCTC 13252 / RB50) (Alcaligenes bronchisepticus) protein is Lipid A acyltransferase PagP.